The following is a 284-amino-acid chain: NADH-cytochrome b5 reductase 1 (284 aa).

Residues P8–V28 form a helical membrane-spanning segment. In terms of domain architecture, FAD-binding FR-type spans D41–T144. FAD contacts are provided by residues D124–G139 and H150–L182.

The protein belongs to the flavoprotein pyridine nucleotide cytochrome reductase family. In terms of assembly, monomer. Component of the 2-(3-amino-3-carboxypropyl)histidine synthase complex composed of DPH1, DPH2, DPH3 and a NADH-dependent reductase, predominantly CBR1. FAD serves as cofactor.

The protein localises to the mitochondrion outer membrane. It carries out the reaction 2 Fe(III)-[cytochrome b5] + NADH = 2 Fe(II)-[cytochrome b5] + NAD(+) + H(+). The enzyme catalyses 2 Fe(3+)-[Dph3] + NADH = 2 Fe(2+)-[Dph3] + NAD(+) + H(+). Its pathway is protein modification; peptidyl-diphthamide biosynthesis. Functionally, NADH-dependent reductase for DPH3 and cytochrome b5. Required for the first step of diphthamide biosynthesis, a post-translational modification of histidine which occurs in elongation factor 2. DPH1 and DPH2 transfer a 3-amino-3-carboxypropyl (ACP) group from S-adenosyl-L-methionine (SAM) to a histidine residue, the reaction is assisted by a reduction system comprising DPH3 and a NADH-dependent reductase, predominantly CBR1. By reducing DPH3, also involved in the formation of the tRNA wobble base modification mcm5s 2U (5-methoxycarbonylmethyl-2-thiouridine), mediated by the elongator complex. The cytochrome b5/NADH cytochrome b5 reductase electron transfer system supports the catalytic activity of several sterol biosynthetic enzymes. In Meyerozyma guilliermondii (strain ATCC 6260 / CBS 566 / DSM 6381 / JCM 1539 / NBRC 10279 / NRRL Y-324) (Yeast), this protein is NADH-cytochrome b5 reductase 1 (CBR1).